We begin with the raw amino-acid sequence, 344 residues long: Heat-inducible transcription repressor hrcA (344 aa).

This sequence belongs to the HrcA family.

Negative regulator of class I heat shock genes (grpE-dnaK-dnaJ and groELS operons). Prevents heat-shock induction of these operons. The protein is Heat-inducible transcription repressor hrcA of Streptococcus pyogenes serotype M3 (strain ATCC BAA-595 / MGAS315).